The primary structure comprises 528 residues: Chaperonin GroEL, chloroplastic (528 aa).

ATP-binding positions include Thr-29–Pro-32, Asp-86–Thr-90, Gly-414, and Asp-496.

It belongs to the chaperonin (HSP60) family. Forms a cylinder of 14 subunits composed of two heptameric rings stacked back-to-back. Interacts with the co-chaperonin GroES.

Its subcellular location is the plastid. It is found in the chloroplast. The enzyme catalyses ATP + H2O + a folded polypeptide = ADP + phosphate + an unfolded polypeptide.. Functionally, together with its co-chaperonin GroES, plays an essential role in assisting protein folding. The GroEL-GroES system forms a nano-cage that allows encapsulation of the non-native substrate proteins and provides a physical environment optimized to promote and accelerate protein folding. The sequence is that of Chaperonin GroEL, chloroplastic from Porphyra purpurea (Red seaweed).